The chain runs to 948 residues: UvrABC system protein A (948 aa).

42-49 (GLSGSGKS) contributes to the ATP binding site. A C4-type zinc finger spans residues 262–289 (CPVCSYSLPELEPRLFSFNNPMGSCPTC). ABC transporter domains lie at 319 to 596 (WDKR…ENSV) and 616 to 945 (VNPG…KYLK). Residue 649 to 656 (GVSGSGKS) coordinates ATP. The C4-type zinc finger occupies 748–774 (CEACQGDGVIKVEMHFLPDVYVPCEVC).

It belongs to the ABC transporter superfamily. UvrA family. Forms a heterotetramer with UvrB during the search for lesions.

It is found in the cytoplasm. Its function is as follows. The UvrABC repair system catalyzes the recognition and processing of DNA lesions. UvrA is an ATPase and a DNA-binding protein. A damage recognition complex composed of 2 UvrA and 2 UvrB subunits scans DNA for abnormalities. When the presence of a lesion has been verified by UvrB, the UvrA molecules dissociate. The protein is UvrABC system protein A of Neisseria meningitidis serogroup A / serotype 4A (strain DSM 15465 / Z2491).